The chain runs to 211 residues: C-type lectin domain-containing protein 158 (211 aa).

The N-terminal stretch at Met-1 to Ala-16 is a signal peptide.

The polypeptide is C-type lectin domain-containing protein 158 (clec-158) (Caenorhabditis elegans).